Consider the following 809-residue polypeptide: MVAAKENKFLTVAPFECAWSDDLKFREAGRGCVAFDAFAHNDVTVVFRENVGTQHYHYKKDNSPHYIVIIGSNRNRRLKIQVDGKSVVDEEASDLCRCSLEFQSYWISIYDGLISIGKGRYPFQNLVFKWQDPKPNCNVQYVGLSSWDKHVGYRNVSVFPVTHNHILLWKQVDCREVRGDESGDEKVVEEGTGYDYEQWGLGNFLESWQLSDTVFLVGEEEMDVPAHKVILQASGNFPLRSSDGDVIQLRGVSYPILHALLQYIYTGRTQILESELAPLRDLSSKFEVMSLVRQCEESIDHFKLSKTAFDSCRKVKLLCPISHPLSGFMFPSAFPVDVGKLVKLYSTGEYSDIKIYLSDHSLTFQSHKVILSLWSVAFAKMFTNGMSESHSSTIYLTDVSPEAFKAMMNFMYSGELNMEDTVNFGTELIHLLFLADRFGVVPLHQECCKMLLECLSEDSVCSVLQVVSSISSCKLIEEMCKRKFSMHFDYCTTASLDFVLLDQTTFSDILESADLTVTSEEKILNAVLMWCMKAEESHSWGVIDEMMNYADPKSLFKERLQSLDDLLPHVRFSLLPYELLKRLENSNLSKEIPVFNRLLKEAASFLTSGLISPGNEPISRFQHRRSSFKELQYIRDGDSNGVLHFVGTSYGSHQWVNPVLAKKINITSSSPTSRFTDPKALASKAYAGTSFAGPRMEDGHISSWWVVDLGEEHQLMCNYYTFRQDGSRAFTRFWKFQGSMDGKTWTDLRVHEDDQTMCKAGQFASWPITAANALLPFRFFRLVLTGPTADTSTPWNFCICYLELYGYFR.

BTB domains lie at 211 to 273 (SDTV…QILE) and 351 to 420 (SDIK…NMED). A BACK domain is found at 466–537 (VVSSISSCKL…LMWCMKAEES (72 aa)).

The protein operates within protein modification; protein ubiquitination. In terms of biological role, may act as a substrate-specific adapter of an E3 ubiquitin-protein ligase complex (CUL3-RBX1-BTB) which mediates the ubiquitination and subsequent proteasomal degradation of target proteins. In Arabidopsis thaliana (Mouse-ear cress), this protein is BTB/POZ domain-containing protein At2g30600.